Consider the following 255-residue polypeptide: Poxin (255 aa).

It belongs to the poxin family. Highly divergent.

It catalyses the reaction 2',3'-cGAMP + H2O = Gp(2'-5')Ap(3') + H(+). Nuclease that cleaves 2',3'-cGAMP. The sequence is that of Poxin from Bombyx mori (Silk moth).